The primary structure comprises 91 residues: Signal recognition particle 19 kDa protein (91 aa).

This sequence belongs to the SRP19 family. As to quaternary structure, part of the signal recognition particle protein translocation system, which is composed of SRP and FtsY. Archaeal SRP consists of a 7S RNA molecule of 300 nucleotides and two protein subunits: SRP54 and SRP19.

It localises to the cytoplasm. Functionally, involved in targeting and insertion of nascent membrane proteins into the cytoplasmic membrane. Binds directly to 7S RNA and mediates binding of the 54 kDa subunit of the SRP. In Methanothermobacter thermautotrophicus (strain ATCC 29096 / DSM 1053 / JCM 10044 / NBRC 100330 / Delta H) (Methanobacterium thermoautotrophicum), this protein is Signal recognition particle 19 kDa protein.